We begin with the raw amino-acid sequence, 475 residues long: Sulfate adenylyltransferase subunit 1 (475 aa).

Residues 25–239 (KSLLRFLTCG…EVLETVEIQR (215 aa)) enclose the tr-type G domain. The tract at residues 34-41 (GSVDDGKS) is G1. 34-41 (GSVDDGKS) contacts GTP. The segment at 92–96 (GITID) is G2. A G3 region spans residues 113–116 (DTPG). GTP-binding positions include 113–117 (DTPGH) and 168–171 (NKMD). A G4 region spans residues 168-171 (NKMD). The G5 stretch occupies residues 206-208 (SAL).

Belongs to the TRAFAC class translation factor GTPase superfamily. Classic translation factor GTPase family. CysN/NodQ subfamily. As to quaternary structure, heterodimer composed of CysD, the smaller subunit, and CysN.

The catalysed reaction is sulfate + ATP + H(+) = adenosine 5'-phosphosulfate + diphosphate. The protein operates within sulfur metabolism; hydrogen sulfide biosynthesis; sulfite from sulfate: step 1/3. With CysD forms the ATP sulfurylase (ATPS) that catalyzes the adenylation of sulfate producing adenosine 5'-phosphosulfate (APS) and diphosphate, the first enzymatic step in sulfur assimilation pathway. APS synthesis involves the formation of a high-energy phosphoric-sulfuric acid anhydride bond driven by GTP hydrolysis by CysN coupled to ATP hydrolysis by CysD. This is Sulfate adenylyltransferase subunit 1 from Escherichia coli (strain UTI89 / UPEC).